The sequence spans 233 residues: 2,3,4,5-tetrahydropyridine-2,6-dicarboxylate N-acetyltransferase (233 aa).

This sequence belongs to the transferase hexapeptide repeat family. DapH subfamily.

The enzyme catalyses (S)-2,3,4,5-tetrahydrodipicolinate + acetyl-CoA + H2O = L-2-acetamido-6-oxoheptanedioate + CoA. It functions in the pathway amino-acid biosynthesis; L-lysine biosynthesis via DAP pathway; LL-2,6-diaminopimelate from (S)-tetrahydrodipicolinate (acetylase route): step 1/3. Its function is as follows. Catalyzes the transfer of an acetyl group from acetyl-CoA to tetrahydrodipicolinate. The sequence is that of 2,3,4,5-tetrahydropyridine-2,6-dicarboxylate N-acetyltransferase from Thermotoga petrophila (strain ATCC BAA-488 / DSM 13995 / JCM 10881 / RKU-1).